We begin with the raw amino-acid sequence, 259 residues long: L-ornithine N(alpha)-acyltransferase (259 aa).

Belongs to the acetyltransferase family. OlsB subfamily.

It catalyses the reaction a (3R)-hydroxyacyl-[ACP] + L-ornithine = a lyso-ornithine lipid + holo-[ACP] + H(+). It participates in lipid metabolism. Catalyzes the first step in the biosynthesis of ornithine lipids, which are phosphorus-free membrane lipids. Catalyzes the 3-hydroxyacyl-acyl carrier protein-dependent acylation of ornithine to form lyso-ornithine lipid (LOL). This is L-ornithine N(alpha)-acyltransferase from Rhodobacter capsulatus (strain ATCC BAA-309 / NBRC 16581 / SB1003).